The primary structure comprises 102 residues: RNA-binding protein Hfq (102 aa).

The Sm domain occupies 9–68; sequence DPFLNALRRERVPVSIYLVNGIKLQGQIESFDQFVILLKNTVSQMVYKHAISTVVPSRPV. Residues 63-102 are disordered; it reads VPSRPVSHHSNNAGGGTSSNYHHGSSAQNTSAQQDSEETE. Residues 70–96 show a composition bias toward polar residues; the sequence is HHSNNAGGGTSSNYHHGSSAQNTSAQQ.

The protein belongs to the Hfq family. As to quaternary structure, homohexamer.

Its function is as follows. RNA chaperone that binds small regulatory RNA (sRNAs) and mRNAs to facilitate mRNA translational regulation in response to envelope stress, environmental stress and changes in metabolite concentrations. Also binds with high specificity to tRNAs. In Escherichia fergusonii (strain ATCC 35469 / DSM 13698 / CCUG 18766 / IAM 14443 / JCM 21226 / LMG 7866 / NBRC 102419 / NCTC 12128 / CDC 0568-73), this protein is RNA-binding protein Hfq.